Reading from the N-terminus, the 648-residue chain is Probable LRR receptor-like serine/threonine-protein kinase At4g30520 (648 aa).

Residues 1-30 (MVVVTKKTMKIQIHLLYSFLFLCFSTLTLS) form the signal peptide. The Extracellular segment spans residues 31 to 238 (SEPRNPEVEA…SSSGRRSNRL (208 aa)). N-linked (GlcNAc...) asparagine glycosylation is found at N99 and N112. LRR repeat units lie at residues 100–125 (LTNLRQVSLQNNNISGKIPPELGFLP), 127–148 (LQTLDLSNNRFSGDIPVSIDQL), 149–172 (SSLQYLRLNNNSLSGPFPASLSQI), and 174–199 (HLSFLDLSYNNLSGPVPKFPARTFNV). N158 and N184 each carry an N-linked (GlcNAc...) asparagine glycan. The helical transmembrane segment at 239–259 (AIALSVSLGSVVILVLALGSF) threads the bilayer. Topologically, residues 260-648 (CWYRKKQRRL…SFAMELSGPR (389 aa)) are cytoplasmic. T300 carries the post-translational modification Phosphothreonine. One can recognise a Protein kinase domain in the interval 303–582 (FSSKNILGAG…EGDGLAERWA (280 aa)). 309 to 317 (LGAGGFGNV) is an ATP binding site. The residue at position 326 (T326) is a Phosphothreonine. Position 331 (K331) interacts with ATP. 2 positions are modified to phosphoserine: S384 and S387. D426 acts as the Proton acceptor in catalysis. A phosphothreonine mark is found at T459, T460, and T465. At Y473 the chain carries Phosphotyrosine. Phosphoserine is present on S475. T476 bears the Phosphothreonine mark. S480 bears the Phosphoserine mark. A Phosphothreonine modification is found at T555.

Belongs to the protein kinase superfamily. Ser/Thr protein kinase family.

The protein resides in the cell membrane. It carries out the reaction L-seryl-[protein] + ATP = O-phospho-L-seryl-[protein] + ADP + H(+). The catalysed reaction is L-threonyl-[protein] + ATP = O-phospho-L-threonyl-[protein] + ADP + H(+). This is Probable LRR receptor-like serine/threonine-protein kinase At4g30520 from Arabidopsis thaliana (Mouse-ear cress).